Consider the following 231-residue polypeptide: ATP phosphoribosyltransferase (231 aa).

It belongs to the ATP phosphoribosyltransferase family. Short subfamily. Heteromultimer composed of HisG and HisZ subunits.

It localises to the cytoplasm. The enzyme catalyses 1-(5-phospho-beta-D-ribosyl)-ATP + diphosphate = 5-phospho-alpha-D-ribose 1-diphosphate + ATP. It participates in amino-acid biosynthesis; L-histidine biosynthesis; L-histidine from 5-phospho-alpha-D-ribose 1-diphosphate: step 1/9. In terms of biological role, catalyzes the condensation of ATP and 5-phosphoribose 1-diphosphate to form N'-(5'-phosphoribosyl)-ATP (PR-ATP). Has a crucial role in the pathway because the rate of histidine biosynthesis seems to be controlled primarily by regulation of HisG enzymatic activity. The chain is ATP phosphoribosyltransferase from Sinorhizobium medicae (strain WSM419) (Ensifer medicae).